A 207-amino-acid chain; its full sequence is ConoCAP (207 aa).

The N-terminal stretch at methionine 1–alanine 21 is a signal peptide. A propeptide spanning residues aspartate 22–serine 48 is cleaved from the precursor. Cysteine 53 and cysteine 59 are disulfide-bonded. The residue at position 60 (glycine 60) is a Glycine amide. A propeptide spanning residues histidine 63–alanine 82 is cleaved from the precursor. Residues cysteine 87 and cysteine 92 are joined by a disulfide bond. At asparagine 94 the chain carries Asparagine amide. Residues serine 98 to serine 160 constitute a propeptide that is removed on maturation. The disordered stretch occupies residues alanine 131–alanine 155. Residues arginine 143–aspartate 152 show a composition bias toward basic and acidic residues. A disulfide bond links cysteine 165 and cysteine 171. Glycine amide is present on glycine 173. The propeptide occupies threonine 177 to glutamate 207.

Expressed by the venom duct.

Its subcellular location is the secreted. Functionally, in contrast to other members of the CCAP family which are cardio-accelerators, conoCAP-a decreases the heart frequency in Drosophila larvae (26%), rats and zebrafish embryos. It also reduces the blood pressure in rats. It decreases systolic calcium in ventricular cardiac myocytes, indicating that it may act via impairment of intracellular calcium trafficking. In terms of biological role, synthetic conoCAP-b decreases the heart frequency of 23% in Drosophila larvae. Synthetic conoCAP-c decreases the heart frequency of 12% in Drosophila larvae. This Conus villepinii (Villepin's cone) protein is ConoCAP (conoCAP).